We begin with the raw amino-acid sequence, 429 residues long: Queuine tRNA-ribosyltransferase accessory subunit 2 (429 aa).

The Zn(2+) site is built by cysteine 330, cysteine 332, cysteine 335, and histidine 361.

This sequence belongs to the queuine tRNA-ribosyltransferase family. QTRT2 subfamily. Heterodimer of a catalytic subunit and an accessory subunit. Zn(2+) serves as cofactor.

The protein localises to the cytoplasm. In terms of biological role, non-catalytic subunit of the queuine tRNA-ribosyltransferase (TGT) that catalyzes the base-exchange of a guanine (G) residue with queuine (Q) at position 34 (anticodon wobble position) in tRNAs with GU(N) anticodons (tRNA-Asp, -Asn, -His and -Tyr), resulting in the hypermodified nucleoside queuosine (7-(((4,5-cis-dihydroxy-2-cyclopenten-1-yl)amino)methyl)-7-deazaguanosine). The sequence is that of Queuine tRNA-ribosyltransferase accessory subunit 2 from Culex quinquefasciatus (Southern house mosquito).